The sequence spans 108 residues: MSFSRRPKVTKSDIVNQISLNIKNSNEKLEKKYIRLVVDAFFEELKNSLCLNNVIEFRSFGTFELRKRKGRQNARNPQTGEYVNVDDHHVAYFRPGKDLKDGVWGIKG.

It belongs to the bacterial histone-like protein family.

Its function is as follows. Histone-like DNA-binding protein which is capable of wrapping DNA to stabilize it, and thus to prevent its denaturation under extreme environmental conditions. This is DNA-binding protein HBbu (hbb) from Borrelia parkeri.